We begin with the raw amino-acid sequence, 207 residues long: Nuclear transcription factor Y subunit beta (207 aa).

The segment at 1-52 is a domain; that stretch reads MTMDGDSSTTDASQLGISADYIGGSHYVIQPHDDTEDSMNDHEDTNGSKESF. The segment at 27-52 is disordered; that stretch reads YVIQPHDDTEDSMNDHEDTNGSKESF. Positions 39 to 52 are enriched in basic and acidic residues; the sequence is MNDHEDTNGSKESF. The segment at 53 to 142 is b domain; sequence REQDIYLPIA…PLKLYLQKFR (90 aa). The DNA-binding element occupies 59-65; it reads LPIANVA. Positions 86–97 are subunit association domain (SAD); the sequence is VQECVSEFISFI. Lys140 participates in a covalent cross-link: Glycyl lysine isopeptide (Lys-Gly) (interchain with G-Cter in ubiquitin). Positions 143–207 are c domain; that stretch reads EAMKGEKGIG…ISGVQQIQFS (65 aa).

Belongs to the NFYB/HAP3 subunit family. Heterotrimeric transcription factor composed of three components, NF-YA, NF-YB and NF-YC. NF-YB and NF-YC must interact and dimerize for NF-YA association and DNA binding. Interacts with C1QBP. In terms of processing, monoubiquitination at Lys-140 plays an important role in transcriptional activation by allowing the deposition of histone H3 methylations as well as histone H2B monoubiquitination at 'Lys-121'.

It localises to the nucleus. Its function is as follows. Component of the sequence-specific heterotrimeric transcription factor (NF-Y) which specifically recognizes a 5'-CCAAT-3' box motif found in the promoters of its target genes. NF-Y can function as both an activator and a repressor, depending on its interacting cofactors. In Bos taurus (Bovine), this protein is Nuclear transcription factor Y subunit beta (NFYB).